A 224-amino-acid chain; its full sequence is MPAPGQGPRGPLLSMPGRRGALREPADFGSSLGAVLALLLLLLPACCPVRAQNDTEPIVLEGKCLVVCDSSPSGDGAVTSSLGISVRSGSAKVAFSATRSTNHEPSEMSNRTMTIYFDQVLVNIGNHFDLASSIFVAPRKGIYSFSFHVVKVYNRQTIQVSLMQNGYPVISAFAGDQDVTREAASNGVLLLMEREDKVHLKLERGNLMGGWKYSTFSGFLVFPL.

The signal sequence occupies residues 1–51 (MPAPGQGPRGPLLSMPGRRGALREPADFGSSLGAVLALLLLLLPACCPVRA). Asn-53 and Asn-110 each carry an N-linked (GlcNAc...) asparagine glycan. One can recognise a C1q domain in the interval 88–224 (SGSAKVAFSA…TFSGFLVFPL (137 aa)).

Homohexamer; disulfide-linked homotrimers. The trimers are assembled via the globular C1q domains. The trimers associate via N-terminal cysteine residues to form disulfide-linked hexamers. May form homooligomers or heterooligomers with CBLN1 and CBLN3 prior to secretion. Once secreted, does not interact with other CBLN family members. Interacts with GRID2, and more weakly with GRID1. Interacts with NRXN1 and NRXN2 long and short isoforms produced by alternative promoter usage. Weakly interacts with NRXN3 short isoform and not at all with NRXN3 long isoform. As to expression, expressed in various brain regions with higher levels in the olfactory bulb, cerebral cortex, certain thalamic and hypothalamic nuclei, superior and inferior colliculi and some brainstem nuclei. Highly expressed in the dorsal medial habenula.

The protein resides in the secreted. Its function is as follows. Acts as a synaptic organizer in specific subsets of neurons in the brain. Essential for long-term maintenance but not establishment of excitatory synapses. Functions as part of a trans-synaptic complex by binding to postsynaptic GRID1 and presynaptic neurexins. This interaction helps regulate the activity of NMDA and AMPA receptors at hippocampal synapses without affecting synapse formation. NRXN1B-CBLN2-GRID1 complex transduce presynaptic signals into postsynaptic NMDAR response. NRXN3B-CBLN2-GRID1 complex transduce presynaptic signals into postsynaptic AMPAR response. This Mus musculus (Mouse) protein is Cerebellin-2 (Cbln2).